Reading from the N-terminus, the 477-residue chain is Regulator of G-protein signaling 7 (477 aa).

Residues 37 to 112 (EKNGIPIRTV…DDGTFYRFQT (76 aa)) form the DEP domain. Residues Ser-229 and Ser-241 each carry the phosphoserine modification. Residues 236–257 (DIRSHSPTHTPTPETKPPTEDE) are disordered. Position 243 is a phosphothreonine (Thr-243). One can recognise a G protein gamma domain in the interval 255-316 (EDELHRQIKY…LSDDTTFWEL (62 aa)). An RGS domain is found at 333–448 (GMDEALKDPV…IRSSAYQELL (116 aa)). At Ser-434 the chain carries Phosphoserine.

Interacts with GNB5, forming the RGS7-GNB5 complex. Interacts with GPR158; promotes the GTPase activator activity of the RGS7-GNB5 complex in absence of glycine, in contrast GTPase activator activity of the RGS7-GNB5 complex is inhibited in presence of glycine. Interacts with GPR179. Interacts with PKD1; this prevents rapid proteasomal degradation. Interacts with RGS7BP, leading to regulate the subcellular location of the heterodimer formed with GNB5. Interacts (phosphorylated form) with 14-3-3 protein YWHAQ. Interacts with SNAPIN. Interacts with GNAI1. Interacts with GNAO1, GNAI3 and GNAZ. Post-translationally, palmitoylated. Ubiquitinated, leading to rapid proteasomal degradation. In terms of processing, phosphorylation and subsequent interaction with 14-3-3 proteins inhibits GAP activity. In terms of tissue distribution, brain-specific. Predominantly cerebellar granule cells.

Its subcellular location is the cytoplasm. It localises to the cytosol. The protein resides in the cell membrane. It is found in the membrane. Its function is as follows. GTPase activator component of the RGS7-GNB5 complex that regulates G protein-coupled receptor signaling cascades. The RGS7-GNB5 complex acts as an inhibitor signal transduction by promoting the GTPase activity of G protein alpha subunits, such as GNAO1, thereby driving them into their inactive GDP-bound form. May play a role in synaptic vesicle exocytosis. Glycine-dependent regulation of the RGS7-GNB5 complex by GPR158 affects mood and cognition via its ability to regulate neuronal excitability in L2/L3 pyramidal neurons of the prefrontal cortex. Modulates the activity of potassium channels that are activated by GNAO1 in response to muscarinic acetylcholine receptor M2/CHRM2 signaling. In Rattus norvegicus (Rat), this protein is Regulator of G-protein signaling 7 (Rgs7).